The primary structure comprises 325 residues: Serine/threonine-protein kinase CtkA (325 aa).

ATP-binding positions include asparagine 21–lysine 24, lysine 37, glutamine 72, and lysine 88–phenylalanine 90. 2 residues coordinate Mg(2+): asparagine 160 and aspartate 179. Aspartate 179 is a binding site for ATP. Residues glutamine 296–arginine 325 are disordered.

Autophosphorylates on either Thr-3 or Thr-7.

It localises to the secreted. Its subcellular location is the host cytoplasm. It is found in the host cytosol. The protein localises to the host nucleus. The enzyme catalyses L-seryl-[protein] + ATP = O-phospho-L-seryl-[protein] + ADP + H(+). The catalysed reaction is L-threonyl-[protein] + ATP = O-phospho-L-threonyl-[protein] + ADP + H(+). Its function is as follows. Virulence factor acting as a pro-inflammatory protein that induces the secretion of the pro-inflammatory cytokines TNF-alpha (tumor necrosis factor-alpha) and IL-8 (interleukin-8) from human macrophages, as well as enhanced translocation of the transcription factor NF-kappa-B complex in macrophages. Is a kinase capable of autophosphorylating itself at a threonine residue near the N-terminus. Also leads to enhanced phosphorylation of the NF-kappa-B p65 subunit (RELA) at 'Ser-276' in human epithelial cancer cells; its kinase activity is required for this enhanced phosphorylation that up-regulates NF-kappa-B activity, but it does not directly phosphorylate this protein. Thus, the kinase activity of CtkA may play an important role in the induction of host inflammatory responses during H.pylori infection. This chain is Serine/threonine-protein kinase CtkA (ctkA), found in Helicobacter pylori (strain J99 / ATCC 700824) (Campylobacter pylori J99).